A 185-amino-acid chain; its full sequence is ATP synthase subunit b (185 aa).

A helical transmembrane segment spans residues 26–46 (LVLIGFAILLFIVIKFVVPMF).

This sequence belongs to the ATPase B chain family. In terms of assembly, F-type ATPases have 2 components, F(1) - the catalytic core - and F(0) - the membrane proton channel. F(1) has five subunits: alpha(3), beta(3), gamma(1), delta(1), epsilon(1). F(0) has three main subunits: a(1), b(2) and c(10-14). The alpha and beta chains form an alternating ring which encloses part of the gamma chain. F(1) is attached to F(0) by a central stalk formed by the gamma and epsilon chains, while a peripheral stalk is formed by the delta and b chains.

It is found in the cell membrane. Functionally, f(1)F(0) ATP synthase produces ATP from ADP in the presence of a proton or sodium gradient. F-type ATPases consist of two structural domains, F(1) containing the extramembraneous catalytic core and F(0) containing the membrane proton channel, linked together by a central stalk and a peripheral stalk. During catalysis, ATP synthesis in the catalytic domain of F(1) is coupled via a rotary mechanism of the central stalk subunits to proton translocation. Component of the F(0) channel, it forms part of the peripheral stalk, linking F(1) to F(0). The polypeptide is ATP synthase subunit b (Renibacterium salmoninarum (strain ATCC 33209 / DSM 20767 / JCM 11484 / NBRC 15589 / NCIMB 2235)).